We begin with the raw amino-acid sequence, 117 residues long: Large ribosomal subunit protein bL20 (117 aa).

The protein belongs to the bacterial ribosomal protein bL20 family.

In terms of biological role, binds directly to 23S ribosomal RNA and is necessary for the in vitro assembly process of the 50S ribosomal subunit. It is not involved in the protein synthesizing functions of that subunit. The sequence is that of Large ribosomal subunit protein bL20 from Limosilactobacillus reuteri (strain DSM 20016) (Lactobacillus reuteri).